Consider the following 188-residue polypeptide: MTKLIYLIGPSGAGKDSLLRAIRQLPLPRLLVAHRYITRPAEIQGENHIALTPEEFAIRQQLGIFALDWQAHQCHYGIGIEIDYWLQRGSYVIVNGSRAYLTQARERYGNTLFPICLTVSESALRQRLRARGRESEQQIATRLQRAEDEQSRLQSDCILLNNDGDLQRTLSTFQSLLPFDRACAAHRE.

9 to 16 (GPSGAGKD) serves as a coordination point for ATP.

Belongs to the ribose 1,5-bisphosphokinase family.

The enzyme catalyses alpha-D-ribose 1,5-bisphosphate + ATP = 5-phospho-alpha-D-ribose 1-diphosphate + ADP. The protein operates within metabolic intermediate biosynthesis; 5-phospho-alpha-D-ribose 1-diphosphate biosynthesis; 5-phospho-alpha-D-ribose 1-diphosphate from D-ribose 5-phosphate (route II): step 3/3. Catalyzes the phosphorylation of ribose 1,5-bisphosphate to 5-phospho-D-ribosyl alpha-1-diphosphate (PRPP). In Pectobacterium atrosepticum (strain SCRI 1043 / ATCC BAA-672) (Erwinia carotovora subsp. atroseptica), this protein is Ribose 1,5-bisphosphate phosphokinase PhnN.